A 131-amino-acid polypeptide reads, in one-letter code: MPVTDSIADYITRIRNAGRAKNKTTDIPYSKLRENLSQLLVEKGYIKNFTVITTEKFPFLRIDLKYTAHGDPAIKEISRVSKPGRRVYDGKDIKKYLGGLGLYILSSSKGVITDKEARAQGVGGEILFRIY.

The protein belongs to the universal ribosomal protein uS8 family. As to quaternary structure, part of the 30S ribosomal subunit. Contacts proteins S5 and S12.

Functionally, one of the primary rRNA binding proteins, it binds directly to 16S rRNA central domain where it helps coordinate assembly of the platform of the 30S subunit. This is Small ribosomal subunit protein uS8 from Pelodictyon phaeoclathratiforme (strain DSM 5477 / BU-1).